The sequence spans 436 residues: uncharacterized protein (436 aa).

A signal peptide spans Met1–Ala18.

This is an uncharacterized protein from Aquifex aeolicus (strain VF5).